The primary structure comprises 421 residues: MSRQMWLDTSALLEAISEYVVRCNGDTFSGLTTGDFNALSNMFTQLSVSSAGYVSDPRVPLQTMSNMFVSFITSTDRCGYMLRKTWFNSDTKPTVSDDFITTYIRPRLQVPMSDTVRQLNNLSLQPSAKPKLYERQNAIMKGLDIPYSEPIEPCKLFRSVAGQTGNIPMMGILATPPAAQQQPFFVAERRRILFGIRSNAAIPAGAYQFVVPAWASVLSVTGAYVYFTNSFFGTTIAGVTATATAADAATTFTVPTDANNLPVQTDSRLSFSLGGGNINLELGVAKTGFCVAIEGEFTILANRSQAYYTLNSITQTPTSIDDFDVSDFLTTFLSQLRACGQYEIFSDAMDQLTNSLITNYMDPPALPAGLAFTSPWFRFSERARTILALQNVDLNIRKLIVRHLWVITSLIAVFGRYYRPN.

Belongs to the phytoreovirus outer capsid protein P8 family. Homotrimer. Homomultimer. Interacts with host peroxisomal glycolate oxidase (GOX). This interaction mediates its relocation to virus factories peripheral to host peroxisomes.

It is found in the virion. Its subcellular location is the host cytoplasm. In terms of biological role, capsid protein which self-assembles to form the outer icosahedral capsid with a T=13 symmetry, about 70 nm in diameter and consisting of 780 molecules capsid proteins. The polypeptide is Outer capsid protein P8 (Alopecurus aequalis (Barnyard grass)).